A 292-amino-acid polypeptide reads, in one-letter code: 2-(5''-triphosphoribosyl)-3'-dephosphocoenzyme-A synthase (292 aa).

Belongs to the CitG/MdcB family.

It carries out the reaction 3'-dephospho-CoA + ATP = 2'-(5''-triphospho-alpha-D-ribosyl)-3'-dephospho-CoA + adenine. In terms of biological role, catalyzes the formation of 2-(5''-triphosphoribosyl)-3'-dephosphocoenzyme-A, the precursor of the prosthetic group of the holo-acyl carrier protein (gamma chain) of citrate lyase, from ATP and dephospho-CoA. The sequence is that of 2-(5''-triphosphoribosyl)-3'-dephosphocoenzyme-A synthase from Escherichia coli (strain UTI89 / UPEC).